A 210-amino-acid polypeptide reads, in one-letter code: Dephospho-CoA kinase (210 aa).

The DPCK domain maps to 18 to 210 (RIGITGGIAS…LSYPQVEVLL (193 aa)). 26-31 (ASGKTS) lines the ATP pocket.

The protein belongs to the CoaE family.

The protein localises to the cytoplasm. It catalyses the reaction 3'-dephospho-CoA + ATP = ADP + CoA + H(+). It participates in cofactor biosynthesis; coenzyme A biosynthesis; CoA from (R)-pantothenate: step 5/5. Functionally, catalyzes the phosphorylation of the 3'-hydroxyl group of dephosphocoenzyme A to form coenzyme A. This chain is Dephospho-CoA kinase, found in Prochlorococcus marinus (strain SARG / CCMP1375 / SS120).